Here is a 353-residue protein sequence, read N- to C-terminus: Paraneoplastic antigen Ma1 homolog (353 aa).

It belongs to the PNMA family.

Its subcellular location is the nucleus. It is found in the nucleolus. The protein is Paraneoplastic antigen Ma1 homolog (PNMA1) of Bos taurus (Bovine).